The chain runs to 1523 residues: ATP-binding cassette sub-family C member 3 (1523 aa).

Residues 1-35 (MDRLCGSGELGSKFWDSNLSIYTNTPDLTPCFQNS) are Extracellular-facing. Asn18 carries N-linked (GlcNAc...) asparagine glycosylation. A helical transmembrane segment spans residues 36-56 (LLAWVPCIYLWAALPCYLFYL). Topologically, residues 57–75 (RHHQLGYIVLSWLSRLKTA) are cytoplasmic. Residues 76 to 96 (LGVLLWCVSWVDLFYSFHGLI) form a helical membrane-spanning segment. Over 97–102 (HGSSPA) the chain is Extracellular. The helical transmembrane segment at 103–123 (PVFFVTPLVVGITMLLATLLI) threads the bilayer. Over 124–129 (QYERLR) the chain is Cytoplasmic. The chain crosses the membrane as a helical span at residues 130 to 150 (GVQSSGVLIIFWLLCVICAII). Residues 151–170 (PFRSKILSALAEGKILDPFR) are Extracellular-facing. Residues 171–191 (FTTFYIYFALVFCALILSCFK) form a helical membrane-spanning segment. Residues 192–301 (EKPPLFSPEN…KSKQPSFLRA (110 aa)) lie on the Cytoplasmic side of the membrane. The chain crosses the membrane as a helical span at residues 302–324 (LVRTFTSSLLMSACFNLIQNLLG). An ABC transmembrane type-1 1 domain is found at 310-593 (LLMSACFNLI…LPQLISGLTQ (284 aa)). At 325–345 (FVNPQLLSILIRFISDPTAPT) the chain is on the extracellular side. Residues 346-366 (WWGFLLAGLMFLSSTMQTLIL) traverse the membrane as a helical segment. At 367–419 (HQYYHCIFVMALRLRTAIIGVIYRKALVITNSVKRESTVGEMVNLMSVDAQRF) the chain is on the cytoplasmic side. Residues 420–440 (MDVSPFINLLWSAPLQVILAI) traverse the membrane as a helical segment. Tyr441 is a topological domain (extracellular). A helical transmembrane segment spans residues 442 to 462 (FLWQILGPSALAGVAVIVLLI). Over 463-535 (PLNGAVSMKM…KGAYLQAIST (73 aa)) the chain is Cytoplasmic. Residues 536 to 556 (FIWICTPFLVTLITLGVYVYV) traverse the membrane as a helical segment. Over 557 to 567 (DESNVLDAEKA) the chain is Extracellular. Residues 568–588 (FVSLSLFNILKIPLNMLPQLI) form a helical membrane-spanning segment. The Cytoplasmic portion of the chain corresponds to 589 to 967 (SGLTQASVSL…YAKSMGLCTT (379 aa)). Residues 626 to 850 (ITIHNGTFTW…DGSFANFLRN (225 aa)) form the ABC transporter 1 domain. 660–667 (GPVGCGKS) is a binding site for ATP. A phosphoserine mark is found at Ser903 and Ser906. Over residues 903-915 (SSLSSEGEVQNRT) the composition is skewed to polar residues. The segment at 903-923 (SSLSSEGEVQNRTMPKKHTNS) is disordered. Positions 967–1248 (TLSICLLYGG…MIRMISDLES (282 aa)) constitute an ABC transmembrane type-1 2 domain. The chain crosses the membrane as a helical span at residues 968 to 988 (LSICLLYGGQSAAAIGANVWL). The Extracellular portion of the chain corresponds to 989–1013 (SAWSNDAEEHGQQNKTSVRLGVYAA). An N-linked (GlcNAc...) asparagine glycan is attached at Asn1002. Residues 1014–1034 (LGILQGLLVMLSAFTMVVGAI) form a helical membrane-spanning segment. The Cytoplasmic portion of the chain corresponds to 1035 to 1071 (QAARLLHEALLHNKIRSPQSFFDTTPSGRILNRFSKD). Residues 1072-1092 (IYVIDEVLAPTILMLLNSFFT) traverse the membrane as a helical segment. The Extracellular segment spans residues 1093–1096 (SIST). The chain crosses the membrane as a helical span at residues 1097–1117 (IMVIVASTPLFMVVVLPLAVL). The Cytoplasmic segment spans residues 1118-1191 (YGFVQRFYVA…YPYIASNRWL (74 aa)). Residues 1192–1212 (GVHVEFVGNCVVLFAALFAVI) traverse the membrane as a helical segment. Residues 1213-1219 (GRNSLNP) are Extracellular-facing. A helical membrane pass occupies residues 1220 to 1240 (GLVGLSVSYALQVTMALNWMI). Over 1241 to 1523 (RMISDLESNI…YGMAKDAGLA (283 aa)) the chain is Cytoplasmic. One can recognise an ABC transporter 2 domain in the interval 1287 to 1519 (FRNYSVRYRP…GGIFYGMAKD (233 aa)). 1319 to 1326 (GRTGAGKS) contacts ATP.

The protein belongs to the ABC transporter superfamily. ABCC family. Conjugate transporter (TC 3.A.1.208) subfamily. In terms of tissue distribution, detected throughout the gastrointestinal tract, liver, lung, pancreas, bladder, gall bladder and at low levels in the adrenal gland.

It is found in the basolateral cell membrane. The protein resides in the basal cell membrane. It carries out the reaction an S-substituted glutathione(in) + ATP + H2O = an S-substituted glutathione(out) + ADP + phosphate + H(+). It catalyses the reaction ATP + H2O + xenobioticSide 1 = ADP + phosphate + xenobioticSide 2.. The enzyme catalyses 17beta-estradiol 17-O-(beta-D-glucuronate)(in) + ATP + H2O = 17beta-estradiol 17-O-(beta-D-glucuronate)(out) + ADP + phosphate + H(+). The catalysed reaction is dehydroepiandrosterone 3-sulfate(in) + ATP + H2O = dehydroepiandrosterone 3-sulfate(out) + ADP + phosphate + H(+). It carries out the reaction leukotriene C4(in) + ATP + H2O = leukotriene C4(out) + ADP + phosphate + H(+). It catalyses the reaction taurocholate(in) + ATP + H2O = taurocholate(out) + ADP + phosphate + H(+). The enzyme catalyses glycocholate(in) + ATP + H2O = glycocholate(out) + ADP + phosphate + H(+). The catalysed reaction is taurolithocholate 3-sulfate(in) + ATP + H2O = taurolithocholate 3-sulfate(out) + ADP + phosphate + H(+). It carries out the reaction taurochenodeoxycholate 3-sulfate(in) + ATP + H2O = taurochenodeoxycholate 3-sulfate(out) + ADP + phosphate + H(+). It catalyses the reaction (4Z,15Z)-bilirubin IXalpha C8-beta-D-glucuronoside(in) + ATP + H2O = (4Z,15Z)-bilirubin IXalpha C8-beta-D-glucuronoside(out) + ADP + phosphate + H(+). The enzyme catalyses (4Z,15Z)-bilirubin IXalpha C8,C12-beta-D-bisglucuronoside(in) + ATP + H2O = (4Z,15Z)-bilirubin IXalpha C8,C12-beta-D-bisglucuronoside(out) + ADP + phosphate + H(+). Its function is as follows. ATP-dependent transporter of the ATP-binding cassette (ABC) family that binds and hydrolyzes ATP to enable active transport of various substrates including many drugs, toxicants and endogenous compound across cell membranes. Transports glucuronide conjugates such as bilirubin diglucuronide, estradiol-17-beta-o-glucuronide and GSH conjugates such as leukotriene C4 (LTC4). Transports also various bile salts (taurocholate, glycocholate, taurochenodeoxycholate-3-sulfate, taurolithocholate- 3-sulfate). Does not contribute substantially to bile salt physiology but provides an alternative route for the export of bile acids and glucuronides from cholestatic hepatocytes. May contribute to regulate the transport of organic compounds in testes across the blood-testis-barrier. This Mus musculus (Mouse) protein is ATP-binding cassette sub-family C member 3 (Abcc3).